A 207-amino-acid chain; its full sequence is Ribonuclease HII (207 aa).

The RNase H type-2 domain maps to 12–201; it reads DLVAGVDEVG…VRAAWEVREG (190 aa). A divalent metal cation is bound by residues Asp-18, Glu-19, and Asp-110.

Belongs to the RNase HII family. It depends on Mn(2+) as a cofactor. Mg(2+) is required as a cofactor.

It localises to the cytoplasm. The catalysed reaction is Endonucleolytic cleavage to 5'-phosphomonoester.. Endonuclease that specifically degrades the RNA of RNA-DNA hybrids. This Pseudomonas putida (strain ATCC 700007 / DSM 6899 / JCM 31910 / BCRC 17059 / LMG 24140 / F1) protein is Ribonuclease HII.